Consider the following 333-residue polypeptide: DNA-directed RNA polymerase subunit alpha (333 aa).

The alpha N-terminal domain (alpha-NTD) stretch occupies residues 1-246; that stretch reads MKKMVQIKYK…AHLQVIGDVK (246 aa). The interval 262-333 is alpha C-terminal domain (alpha-CTD); the sequence is VEPSIHSVDI…YNVTLNRGEK (72 aa).

Belongs to the RNA polymerase alpha chain family. Homodimer. The RNAP catalytic core consists of 2 alpha, 1 beta, 1 beta' and 1 omega subunit. When a sigma factor is associated with the core the holoenzyme is formed, which can initiate transcription.

The enzyme catalyses RNA(n) + a ribonucleoside 5'-triphosphate = RNA(n+1) + diphosphate. Functionally, DNA-dependent RNA polymerase catalyzes the transcription of DNA into RNA using the four ribonucleoside triphosphates as substrates. This chain is DNA-directed RNA polymerase subunit alpha, found in Mycoplasmopsis pulmonis (strain UAB CTIP) (Mycoplasma pulmonis).